A 765-amino-acid polypeptide reads, in one-letter code: Palmitoyltransferase ZDHHC8 (765 aa).

Topologically, residues 1–13 (MPRSPGTRLKPAK) are cytoplasmic. Residues 14–34 (YIPVATAAALLVGSSTLFFVF) form a helical membrane-spanning segment. The Lumenal segment spans residues 35–52 (TCPWLTRAVSPAVPVYNG). A helical transmembrane segment spans residues 53-73 (IIFLFVLANFSMATFMDPGVF). Over 74–148 (PRADEDEDKE…NCIGRRNYRY (75 aa)) the chain is Cytoplasmic. Positions 104–154 (KWCATCHFYRPPRCSHCSVCDNCVEDFDHHCPWVNNCIGRRNYRYFFLFLL) constitute a DHHC domain. Cys134 (S-palmitoyl cysteine intermediate) is an active-site residue. A helical transmembrane segment spans residues 149 to 169 (FFLFLLSLSAHMVGVVAFGLV). The Lumenal segment spans residues 170–190 (YVLNHAEGLGAAHTTITMAVM). A helical transmembrane segment spans residues 191–211 (CVAGLFFIPVIGLTGFHVVLV). The Cytoplasmic segment spans residues 212-765 (TRGRTTNEQV…VGGTTYEISV (554 aa)). Residues 293 to 352 (GLGRSKSKGSLDRLDEKPLDLGPPLPPKIEAGTFSSDLQTPRPGSAESALSVQRTSPPTP) form a disordered region. Positions 301 to 311 (GSLDRLDEKPL) are enriched in basic and acidic residues. Phosphoserine is present on Ser337. Residue Arg441 is modified to Omega-N-methylarginine. The segment at 509 to 540 (LHPGATGDPPRPLPRSFSPVLGPRPREPSPVR) is disordered. Ser606, Ser627, Ser675, Ser725, and Ser743 each carry phosphoserine. Residues 613 to 746 (GPGFGGARNP…PPGPSASPTR (134 aa)) are disordered. Positions 622–653 (PALQTSLSSLSSSVSRAPRTSSSSLQADQASS) are enriched in low complexity.

This sequence belongs to the DHHC palmitoyltransferase family. ERF2/ZDHHC9 subfamily.

The protein localises to the golgi apparatus membrane. Its subcellular location is the mitochondrion membrane. The enzyme catalyses L-cysteinyl-[protein] + hexadecanoyl-CoA = S-hexadecanoyl-L-cysteinyl-[protein] + CoA. Its function is as follows. Palmitoyltransferase that catalyzes the addition of palmitate onto various protein substrates and therefore functions in several unrelated biological processes. Through the palmitoylation of ABCA1 regulates the localization of the transporter to the plasma membrane and thereby regulates its function in cholesterol and phospholipid efflux. Could also pamitoylate the D(2) dopamine receptor DRD2 and regulate its stability and localization to the plasma membrane. Could also play a role in glutamatergic transmission. In Pan troglodytes (Chimpanzee), this protein is Palmitoyltransferase ZDHHC8.